The chain runs to 874 residues: Probable inorganic carbon transporter subunit DabA (874 aa).

4 residues coordinate Zn(2+): C398, D400, H580, and C595.

This sequence belongs to the inorganic carbon transporter (TC 9.A.2) DabA family. In terms of assembly, forms a complex with DabB. The cofactor is Zn(2+).

It localises to the cell membrane. In terms of biological role, part of an energy-coupled inorganic carbon pump. The chain is Probable inorganic carbon transporter subunit DabA from Bacillus cereus (strain ZK / E33L).